A 600-amino-acid chain; its full sequence is ATP-dependent lipid A-core flippase (600 aa).

The next 4 helical transmembrane spans lie at 26 to 46, 82 to 102, 167 to 187, and 266 to 286; these read VGIFLLSILGFVIFASTQPML, LLIVLIAAWQGLGSFLGNYFL, VFLFIYLLMMNWKLTLVMLAI, and PMLQLVIYSAMAVLMFLVLFL. Positions 30-321 constitute an ABC transmembrane type-1 domain; it reads LLSILGFVIF…LSEVSSTIQK (292 aa). Residues 353 to 589 enclose the ABC transporter domain; sequence LEVKNLSFFY…NGYYARLHAM (237 aa). 387-394 serves as a coordination point for ATP; that stretch reads GRSGSGKS.

It belongs to the ABC transporter superfamily. Lipid exporter (TC 3.A.1.106) family. As to quaternary structure, homodimer.

The protein localises to the cell inner membrane. The catalysed reaction is ATP + H2O + lipid A-core oligosaccharideSide 1 = ADP + phosphate + lipid A-core oligosaccharideSide 2.. Functionally, involved in lipopolysaccharide (LPS) biosynthesis. Translocates lipid A-core from the inner to the outer leaflet of the inner membrane. Transmembrane domains (TMD) form a pore in the inner membrane and the ATP-binding domain (NBD) is responsible for energy generation. This chain is ATP-dependent lipid A-core flippase, found in Pseudomonas syringae pv. tomato (strain ATCC BAA-871 / DC3000).